The chain runs to 601 residues: NAD(+)--arginine ADP-ribosyltransferase Chelt (601 aa).

The signal sequence occupies residues 1–18 (MKTIISLIFIMFPLFVSA). Residues 26–43 (ADSR…LYPR) and E130 each bind NAD(+). Residue E130 is part of the active site. A disulfide bridge links C205 with C220.

Belongs to the enterotoxin A family.

The protein resides in the secreted. It catalyses the reaction L-arginyl-[protein] + NAD(+) = N(omega)-(ADP-D-ribosyl)-L-arginyl-[protein] + nicotinamide + H(+). In terms of biological role, a probable mono(ADP-ribosyl)transferase, it may ADP-ribosylate Arg in target protein(s). Upon expression in yeast cells causes cell death. The polypeptide is NAD(+)--arginine ADP-ribosyltransferase Chelt (Vibrio cholerae).